The sequence spans 118 residues: Small ribosomal subunit protein uS13 (118 aa).

The segment at 94 to 118 is disordered; the sequence is GLPVRGQRTKTNARTRKGPRKPIRK.

It belongs to the universal ribosomal protein uS13 family. As to quaternary structure, part of the 30S ribosomal subunit. Forms a loose heterodimer with protein S19. Forms two bridges to the 50S subunit in the 70S ribosome.

Functionally, located at the top of the head of the 30S subunit, it contacts several helices of the 16S rRNA. In the 70S ribosome it contacts the 23S rRNA (bridge B1a) and protein L5 of the 50S subunit (bridge B1b), connecting the 2 subunits; these bridges are implicated in subunit movement. Contacts the tRNAs in the A and P-sites. This chain is Small ribosomal subunit protein uS13, found in Marinobacter nauticus (strain ATCC 700491 / DSM 11845 / VT8) (Marinobacter aquaeolei).